The following is a 350-amino-acid chain: MTGQELAGAEVEADVALAPLTTLRVGPVARRLITATSTEQLVAALRAPVGRDALILAGGSNVVLADDMSDLTVIRVANSEITVRDGIVRAEAGANWDDVVVTALAHGLGGLECLSGIPGSAGATPVQNVGAYGSEVADTIRRVRLFDRRTGRDDWVTPQDMAFGYRTSVLKHSDHAVVLEVEFALDVGGRSAPLRYGELARALDVEPGGRADPVAVRDAVLALRRGKGMVLDEPDRDTWSVGSFFTNPVVTTAQHERLAAEVDGPVPSYPAPDGVKLAAGWLVEHAGFGKGYPGDDAPARLSTKHALAVTNRGHATTADVIALARTVRDGVRTTFGIELTPEPTLVGCTL.

Positions 25-194 (VGPVARRLIT…LDVGGRSAPL (170 aa)) constitute an FAD-binding PCMH-type domain. The active site involves Arg-166. The active-site Proton donor is the Ser-243. Residue Glu-342 is part of the active site.

The protein belongs to the MurB family. Requires FAD as cofactor.

Its subcellular location is the cytoplasm. The catalysed reaction is UDP-N-acetyl-alpha-D-muramate + NADP(+) = UDP-N-acetyl-3-O-(1-carboxyvinyl)-alpha-D-glucosamine + NADPH + H(+). The protein operates within cell wall biogenesis; peptidoglycan biosynthesis. In terms of biological role, cell wall formation. In Mycobacterium sp. (strain MCS), this protein is UDP-N-acetylenolpyruvoylglucosamine reductase.